The sequence spans 309 residues: MPIRVPDELPAVSCLRNENVFVMTSSRASIQDIRPLKVLLLNLMPKKIETENQFLRLLSNSPLQIDIQLLRIDSRVPKNTPVEHLDTFYCDFAQIKEQNFDGLIVTGAPLGLVEFEDVAYWEEIKEIITWAKEHVTSTLFICWAAQAGLNILYDLPKYTLKQKISGVYRHTTCDPFALLTRGFDETFFAPHSRYAGFPVEFIQQNTDLEILATSEQAGAYLFASKDKRVVFATGHPEYDPNTLADEYHRDVKAGLAPQLPENYFPDNNPNKKPLVSWRSHGHLLFANWLNYYVYQITPFDLAQMNPTLD.

Cys142 (acyl-thioester intermediate) is an active-site residue. Substrate contacts are provided by Lys163 and Ser192. His235 serves as the catalytic Proton acceptor. Glu237 is a catalytic residue. Arg249 contributes to the substrate binding site.

It belongs to the MetA family.

It localises to the cytoplasm. It catalyses the reaction L-homoserine + succinyl-CoA = O-succinyl-L-homoserine + CoA. It participates in amino-acid biosynthesis; L-methionine biosynthesis via de novo pathway; O-succinyl-L-homoserine from L-homoserine: step 1/1. Transfers a succinyl group from succinyl-CoA to L-homoserine, forming succinyl-L-homoserine. The polypeptide is Homoserine O-succinyltransferase (Proteus mirabilis (strain HI4320)).